The following is a 1029-amino-acid chain: Protein translocase subunit SecA (1029 aa).

ATP is bound by residues Gln-143, 161–165, and Asp-661; that span reads GEGKT. The segment at 953–1029 is disordered; that stretch reads EQEQKKSQVQ…GKKYKNCCGK (77 aa). Basic and acidic residues-rich tracts occupy residues 966 to 975 and 984 to 996; these read LVARHEKAET and PEGR…ENGK. Positions 1015, 1017, 1026, and 1027 each coordinate Zn(2+).

The protein belongs to the SecA family. Monomer and homodimer. Part of the essential Sec protein translocation apparatus which comprises SecA, SecYEG and auxiliary proteins SecDF. Other proteins may also be involved. It depends on Zn(2+) as a cofactor.

The protein localises to the cell inner membrane. The protein resides in the cytoplasm. It catalyses the reaction ATP + H2O + cellular proteinSide 1 = ADP + phosphate + cellular proteinSide 2.. Part of the Sec protein translocase complex. Interacts with the SecYEG preprotein conducting channel. Has a central role in coupling the hydrolysis of ATP to the transfer of proteins into and across the cell membrane, serving as an ATP-driven molecular motor driving the stepwise translocation of polypeptide chains across the membrane. This chain is Protein translocase subunit SecA, found in Chlorobium phaeobacteroides (strain BS1).